The primary structure comprises 164 residues: uncharacterized protein (164 aa).

This is an uncharacterized protein from Mycobacterium tuberculosis (strain CDC 1551 / Oshkosh).